Reading from the N-terminus, the 39-residue chain is Potassium channel toxin alpha-KTx 2.18 (39 aa).

Cystine bridges form between C7–C29, C13–C34, and C17–C36. At I39 the chain carries Isoleucine amide.

It belongs to the short scorpion toxin superfamily. Potassium channel inhibitor family. Alpha-KTx 02 subfamily. Expressed by the venom gland.

Its subcellular location is the secreted. In terms of biological role, weakly blocks Kv1.3/KCNA3 voltage-gated potassium channels. This Centruroides limpidus (Mexican scorpion) protein is Potassium channel toxin alpha-KTx 2.18.